A 176-amino-acid chain; its full sequence is Large ribosomal subunit protein uL5 (176 aa).

This sequence belongs to the universal ribosomal protein uL5 family. In terms of assembly, part of the 50S ribosomal subunit; contacts the 5S rRNA and probably tRNA. Forms a bridge to the 30S subunit in the 70S ribosome.

This is one of the proteins that bind and probably mediate the attachment of the 5S RNA into the large ribosomal subunit, where it forms part of the central protuberance. In the 70S ribosome it contacts protein S13 of the 30S subunit (bridge B1b), connecting the 2 subunits; this bridge is implicated in subunit movement. May contact the P site tRNA; the 5S rRNA and some of its associated proteins might help stabilize positioning of ribosome-bound tRNAs. The polypeptide is Large ribosomal subunit protein uL5 (Picrophilus torridus (strain ATCC 700027 / DSM 9790 / JCM 10055 / NBRC 100828 / KAW 2/3)).